We begin with the raw amino-acid sequence, 136 residues long: Large ribosomal subunit protein uL16 (136 aa).

This sequence belongs to the universal ribosomal protein uL16 family. In terms of assembly, part of the 50S ribosomal subunit.

Functionally, binds 23S rRNA and is also seen to make contacts with the A and possibly P site tRNAs. The protein is Large ribosomal subunit protein uL16 of Proteus mirabilis (strain HI4320).